Consider the following 455-residue polypeptide: Beta-cyclopiazonate dehydrogenase (455 aa).

Residues 1–25 (MAVRIARFLGLSTVAYLALANGIDA) form the signal peptide.

Belongs to the beta-cyclopiazonate dehydrogenase family. It depends on FAD as a cofactor.

It carries out the reaction beta-cyclopiazonate + A = alpha-cyclopiazonate + AH2. Functionally, beta-cyclopiazonate dehydrogenase involved in the synthesis of the fungal neurotoxin alpha-cyclopiazonic acid (CPA). CpaO carries out the dehydrogenation of beta-CPA to yield an unstable enimine product, which is captured by intramolecular cyclization to create the pentacyclic fused scaffold of alpha-cyclopiazonate. This chain is Beta-cyclopiazonate dehydrogenase, found in Aspergillus oryzae (strain ATCC 42149 / RIB 40) (Yellow koji mold).